Reading from the N-terminus, the 315-residue chain is Ribose-phosphate pyrophosphokinase (315 aa).

ATP is bound by residues 37 to 39 and 96 to 97; these read DSE and RQ. The Mg(2+) site is built by H131 and D170. Residue K194 is part of the active site. Residues R196, D220, and 224-228 contribute to the D-ribose 5-phosphate site; that span reads DTGGT.

This sequence belongs to the ribose-phosphate pyrophosphokinase family. Class I subfamily. In terms of assembly, homohexamer. It depends on Mg(2+) as a cofactor.

It is found in the cytoplasm. The enzyme catalyses D-ribose 5-phosphate + ATP = 5-phospho-alpha-D-ribose 1-diphosphate + AMP + H(+). It functions in the pathway metabolic intermediate biosynthesis; 5-phospho-alpha-D-ribose 1-diphosphate biosynthesis; 5-phospho-alpha-D-ribose 1-diphosphate from D-ribose 5-phosphate (route I): step 1/1. Functionally, involved in the biosynthesis of the central metabolite phospho-alpha-D-ribosyl-1-pyrophosphate (PRPP) via the transfer of pyrophosphoryl group from ATP to 1-hydroxyl of ribose-5-phosphate (Rib-5-P). The protein is Ribose-phosphate pyrophosphokinase of Marinomonas sp. (strain MWYL1).